The chain runs to 299 residues: 4-hydroxybenzoate octaprenyltransferase (299 aa).

The next 7 membrane-spanning stretches (helical) occupy residues 34 to 54 (IGSLLLLWPTWWALWLAADGL), 57 to 77 (LWTLFVFTAGVWLTRSAGCVI), 108 to 128 (LWVFVVLMLVAFALVFTLNWL), 163 to 183 (WGIPMAFAAVQGSVPVLGWLL), 221 to 241 (FDLVAQGILYALMFAVLALVD), 245 to 265 (DLGAAYWAGLGVAALLVAYEF), and 277 to 297 (FRAFLHNNWVGLAIFVGIAVA).

It belongs to the UbiA prenyltransferase family. Mg(2+) is required as a cofactor.

It localises to the cell inner membrane. The catalysed reaction is all-trans-octaprenyl diphosphate + 4-hydroxybenzoate = 4-hydroxy-3-(all-trans-octaprenyl)benzoate + diphosphate. The protein operates within cofactor biosynthesis; ubiquinone biosynthesis. Its function is as follows. Catalyzes the prenylation of para-hydroxybenzoate (PHB) with an all-trans polyprenyl group. Mediates the second step in the final reaction sequence of ubiquinone-8 (UQ-8) biosynthesis, which is the condensation of the polyisoprenoid side chain with PHB, generating the first membrane-bound Q intermediate 3-octaprenyl-4-hydroxybenzoate. The chain is 4-hydroxybenzoate octaprenyltransferase from Xanthomonas oryzae pv. oryzae (strain MAFF 311018).